An 82-amino-acid polypeptide reads, in one-letter code: ATP synthase subunit c, chloroplastic (82 aa).

The next 2 membrane-spanning stretches (helical) occupy residues 3–23 (PLIA…AAIG) and 57–77 (FAFM…LLFA).

It belongs to the ATPase C chain family. In terms of assembly, F-type ATPases have 2 components, F(1) - the catalytic core - and F(0) - the membrane proton channel. F(1) has five subunits: alpha(3), beta(3), gamma(1), delta(1), epsilon(1). F(0) has four main subunits: a(1), b(1), b'(1) and c(10-14). The alpha and beta chains form an alternating ring which encloses part of the gamma chain. F(1) is attached to F(0) by a central stalk formed by the gamma and epsilon chains, while a peripheral stalk is formed by the delta, b and b' chains.

Its subcellular location is the plastid. The protein resides in the chloroplast thylakoid membrane. F(1)F(0) ATP synthase produces ATP from ADP in the presence of a proton or sodium gradient. F-type ATPases consist of two structural domains, F(1) containing the extramembraneous catalytic core and F(0) containing the membrane proton channel, linked together by a central stalk and a peripheral stalk. During catalysis, ATP synthesis in the catalytic domain of F(1) is coupled via a rotary mechanism of the central stalk subunits to proton translocation. Its function is as follows. Key component of the F(0) channel; it plays a direct role in translocation across the membrane. A homomeric c-ring of between 10-14 subunits forms the central stalk rotor element with the F(1) delta and epsilon subunits. The sequence is that of ATP synthase subunit c, chloroplastic from Oltmannsiellopsis viridis (Marine flagellate).